A 402-amino-acid polypeptide reads, in one-letter code: CCA-adding enzyme (402 aa).

The ATP site is built by G32 and R35. Residues G32 and R35 each contribute to the CTP site. Residues D45 and D47 each coordinate Mg(2+). ATP-binding residues include R116, D159, R162, R165, and R168. CTP-binding residues include R116, D159, R162, R165, and R168.

Belongs to the tRNA nucleotidyltransferase/poly(A) polymerase family. Bacterial CCA-adding enzyme type 3 subfamily. As to quaternary structure, homodimer. Mg(2+) serves as cofactor.

It carries out the reaction a tRNA precursor + 2 CTP + ATP = a tRNA with a 3' CCA end + 3 diphosphate. It catalyses the reaction a tRNA with a 3' CCA end + 2 CTP + ATP = a tRNA with a 3' CCACCA end + 3 diphosphate. Functionally, catalyzes the addition and repair of the essential 3'-terminal CCA sequence in tRNAs without using a nucleic acid template. Adds these three nucleotides in the order of C, C, and A to the tRNA nucleotide-73, using CTP and ATP as substrates and producing inorganic pyrophosphate. tRNA 3'-terminal CCA addition is required both for tRNA processing and repair. Also involved in tRNA surveillance by mediating tandem CCA addition to generate a CCACCA at the 3' terminus of unstable tRNAs. While stable tRNAs receive only 3'-terminal CCA, unstable tRNAs are marked with CCACCA and rapidly degraded. In Streptococcus pyogenes serotype M6 (strain ATCC BAA-946 / MGAS10394), this protein is CCA-adding enzyme.